A 189-amino-acid chain; its full sequence is UPF0398 protein lhv_1265 (189 aa).

The protein belongs to the UPF0398 family.

This chain is UPF0398 protein lhv_1265, found in Lactobacillus helveticus (strain DPC 4571).